The following is a 354-amino-acid chain: tRNA N6-adenosine threonylcarbamoyltransferase (354 aa).

Fe cation is bound by residues His-111 and His-115. Substrate is bound by residues Leu-134–Gly-138, Asp-167, Gly-180, and Asn-279. Asp-319 contributes to the Fe cation binding site.

Belongs to the KAE1 / TsaD family. The cofactor is Fe(2+).

It localises to the cytoplasm. The catalysed reaction is L-threonylcarbamoyladenylate + adenosine(37) in tRNA = N(6)-L-threonylcarbamoyladenosine(37) in tRNA + AMP + H(+). Functionally, required for the formation of a threonylcarbamoyl group on adenosine at position 37 (t(6)A37) in tRNAs that read codons beginning with adenine. Is involved in the transfer of the threonylcarbamoyl moiety of threonylcarbamoyl-AMP (TC-AMP) to the N6 group of A37, together with TsaE and TsaB. TsaD likely plays a direct catalytic role in this reaction. The polypeptide is tRNA N6-adenosine threonylcarbamoyltransferase (Neisseria gonorrhoeae (strain ATCC 700825 / FA 1090)).